The following is a 187-amino-acid chain: MASTADFKNGLVLQIDGQLWQIVEFQHVKPGKGPAFVRTKLKNVVSGKVVDKTYNAGVKVETATVDRRDATYLYRDGSDFVFMDSEDYEQHPLPEALVGRAADFLLESMPVQIAFHDGSPLYLELPVTVELVVASTEPGLQGDRSSAGTKPATLETGAEIQVPLFINTGDKLKVDSRDGSYLGRVNA.

The protein belongs to the elongation factor P family.

It localises to the cytoplasm. It functions in the pathway protein biosynthesis; polypeptide chain elongation. Functionally, involved in peptide bond synthesis. Stimulates efficient translation and peptide-bond synthesis on native or reconstituted 70S ribosomes in vitro. Probably functions indirectly by altering the affinity of the ribosome for aminoacyl-tRNA, thus increasing their reactivity as acceptors for peptidyl transferase. In Mycolicibacterium vanbaalenii (strain DSM 7251 / JCM 13017 / BCRC 16820 / KCTC 9966 / NRRL B-24157 / PYR-1) (Mycobacterium vanbaalenii), this protein is Elongation factor P.